The chain runs to 656 residues: FAST kinase domain-containing protein 3, mitochondrial (656 aa).

One can recognise an RAP domain in the interval 587 to 645 (VALCIDGPQRFCLGSKHLLGKEAIKQRHLRLLGYQVVQVPYHELELLTSRLELVDYLQR).

Belongs to the FAST kinase family.

It is found in the mitochondrion. Its function is as follows. Required for normal mitochondrial respiration. Increases steady-state levels and half-lives of a subset of mature mitochondrial mRNAs MT-ND2, MT-ND3, MT-CYTB, MT-CO2, and MT-ATP8/6. Promotes MT-CO1 mRNA translation and increases mitochondrial complex IV assembly and activity. The sequence is that of FAST kinase domain-containing protein 3, mitochondrial (Fastkd3) from Rattus norvegicus (Rat).